The primary structure comprises 363 residues: Pyrimidine monooxygenase RutA (363 aa).

Residues 49-50 (IK), N115, E124, 140-141 (RY), and S190 each bind FMN.

Belongs to the NtaA/SnaA/DszA monooxygenase family. RutA subfamily.

The catalysed reaction is uracil + FMNH2 + NADH + O2 = (Z)-3-ureidoacrylate + FMN + NAD(+) + H2O + H(+). The enzyme catalyses thymine + FMNH2 + NADH + O2 = (Z)-2-methylureidoacrylate + FMN + NAD(+) + H2O + H(+). In terms of biological role, catalyzes the pyrimidine ring opening between N-3 and C-4 by an unusual flavin hydroperoxide-catalyzed mechanism, adding oxygen atoms in the process to yield ureidoacrylate peracid, that immediately reacts with FMN forming ureidoacrylate and FMN-N(5)-oxide. The FMN-N(5)-oxide reacts spontaneously with NADH to produce FMN. Requires the flavin reductase RutF to regenerate FMN in vivo. This Klebsiella variicola (strain At-22) protein is Pyrimidine monooxygenase RutA.